Reading from the N-terminus, the 368-residue chain is N-acetylneuraminate epimerase (368 aa).

A signal peptide spans 1–19; that stretch reads MNKTITALAILMASFAANA. Kelch repeat units lie at residues 40 to 84, 86 to 137, 139 to 173, 174 to 219, 222 to 265, 287 to 336, and 338 to 367; these read TVYI…AFID, NLYV…FVHN, KAYVTGGVNQNIFNGYFEDLNEAGKDSTAVDKINA, HYFD…VNKG, TWLI…VAGG, ENYQ…PWNN, and LLIIGGETAGGKAVTDSVLISVKDNKVTVQ. The active-site Proton acceptor is glutamate 228.

Belongs to the NanM family. As to quaternary structure, homodimer.

The protein resides in the periplasm. It carries out the reaction N-acetyl-alpha-neuraminate = N-acetyl-beta-neuraminate. Its function is as follows. Converts alpha-N-acetylneuranimic acid (Neu5Ac) to the beta-anomer, accelerating the equilibrium between the alpha- and beta-anomers. Probably facilitates sialidase-negative bacteria to compete successfully for limited amounts of extracellular Neu5Ac, which is likely taken up in the beta-anomer. In addition, the rapid removal of sialic acid from solution might be advantageous to the bacterium to damp down host responses. This chain is N-acetylneuraminate epimerase, found in Escherichia coli O157:H7.